A 176-amino-acid polypeptide reads, in one-letter code: ATP-dependent protease subunit HslV (176 aa).

The active site involves Thr-2. Na(+) contacts are provided by Gly-157, Cys-160, and Thr-163.

This sequence belongs to the peptidase T1B family. HslV subfamily. A double ring-shaped homohexamer of HslV is capped on each side by a ring-shaped HslU homohexamer. The assembly of the HslU/HslV complex is dependent on binding of ATP.

Its subcellular location is the cytoplasm. It catalyses the reaction ATP-dependent cleavage of peptide bonds with broad specificity.. Its activity is regulated as follows. Allosterically activated by HslU binding. In terms of biological role, protease subunit of a proteasome-like degradation complex believed to be a general protein degrading machinery. The chain is ATP-dependent protease subunit HslV from Pseudomonas entomophila (strain L48).